Consider the following 459-residue polypeptide: Phosphomethylpyrimidine synthase (459 aa).

Residues Asn-80, Met-109, Tyr-139, His-175, 195-197 (SRG), 236-239 (DSLR), and Glu-275 each bind substrate. His-279 is a Zn(2+) binding site. Tyr-302 lines the substrate pocket. Residue His-343 coordinates Zn(2+). 3 residues coordinate [4Fe-4S] cluster: Cys-423, Cys-426, and Cys-431.

This sequence belongs to the ThiC family. Requires [4Fe-4S] cluster as cofactor.

It carries out the reaction 5-amino-1-(5-phospho-beta-D-ribosyl)imidazole + S-adenosyl-L-methionine = 4-amino-2-methyl-5-(phosphooxymethyl)pyrimidine + CO + 5'-deoxyadenosine + formate + L-methionine + 3 H(+). The protein operates within cofactor biosynthesis; thiamine diphosphate biosynthesis. Catalyzes the synthesis of the hydroxymethylpyrimidine phosphate (HMP-P) moiety of thiamine from aminoimidazole ribotide (AIR) in a radical S-adenosyl-L-methionine (SAM)-dependent reaction. The sequence is that of Phosphomethylpyrimidine synthase from Gloeothece citriformis (strain PCC 7424) (Cyanothece sp. (strain PCC 7424)).